The sequence spans 135 residues: Ribosome-binding factor A (135 aa).

It belongs to the RbfA family. As to quaternary structure, monomer. Binds 30S ribosomal subunits, but not 50S ribosomal subunits or 70S ribosomes.

It localises to the cytoplasm. Functionally, one of several proteins that assist in the late maturation steps of the functional core of the 30S ribosomal subunit. Associates with free 30S ribosomal subunits (but not with 30S subunits that are part of 70S ribosomes or polysomes). Required for efficient processing of 16S rRNA. May interact with the 5'-terminal helix region of 16S rRNA. In Rhodopseudomonas palustris (strain HaA2), this protein is Ribosome-binding factor A.